A 347-amino-acid polypeptide reads, in one-letter code: Inositol 2-dehydrogenase (347 aa).

This sequence belongs to the Gfo/Idh/MocA family. In terms of assembly, homotetramer.

It catalyses the reaction myo-inositol + NAD(+) = scyllo-inosose + NADH + H(+). Functionally, involved in the oxidation of myo-inositol (MI) to 2-keto-myo-inositol (2KMI or 2-inosose). In Rubrobacter xylanophilus (strain DSM 9941 / JCM 11954 / NBRC 16129 / PRD-1), this protein is Inositol 2-dehydrogenase.